The sequence spans 512 residues: Dihydroniloticin synthase CYP71CD2 (512 aa).

A helical transmembrane segment spans residues 1 to 21 (MNLQLDYFSITSFLVFLVVLF). Heme is bound at residue asparagine 436.

The protein belongs to the cytochrome P450 family. The cofactor is heme. As to expression, mainly expressed in petioles and roots, and, to a lower extent, in leaves.

It is found in the membrane. It carries out the reaction tirucalla-7,24-dien-3beta-ol + 2 reduced [NADPH--hemoprotein reductase] + 2 O2 = dihydroniloticin + 2 oxidized [NADPH--hemoprotein reductase] + 2 H2O + 2 H(+). It functions in the pathway secondary metabolite biosynthesis; terpenoid biosynthesis. In terms of biological role, monooxygenase involved in the biosynthesis of limonoids triterpene natural products such as azadirachtin, an antifeedant widely used as bioinsecticide, and possessing many medicinal applications including anti-tumoral, anti-malarial, anti-rheumatic, antibacterial, anti-inflammatory, anti-pyretic and diuretic effects. Catalyzes the conversion of tirucalladienol to dihydroniloticin. The sequence is that of Dihydroniloticin synthase CYP71CD2 from Melia azedarach (Chinaberry tree).